The chain runs to 184 residues: uncharacterized protein (184 aa).

The tract at residues 146 to 177 (HPKTSLAQQPNAKATQPPLSKETLNTAKETDP) is disordered. Residues 150 to 172 (SLAQQPNAKATQPPLSKETLNTA) are compositionally biased toward polar residues.

This is an uncharacterized protein from Picosynechococcus sp. (strain ATCC 27264 / PCC 7002 / PR-6) (Agmenellum quadruplicatum).